Here is a 386-residue protein sequence, read N- to C-terminus: MTAQLNKVRRAIIDGCNPAMISDLLDDLREKNVLVDSEVEHIKESNNTNRDRCRAMIDSVKKKGDDPSNILLESLVKNHKTLAKSLGLHEPPMAPVPIQEHNADTIKNKDIKGVIPCSAEEFKKIQDTQGDKIYDVRKREGRKGLALIICNEKFENLNERHGAKVDLDGMTKLLNELGYQVHPHTNLTKTEMVKVMKEFAAQEEHADSDSTFIVLMSHGDRQGVCGTDSKKTEKEKGQYEVTNLLEIDEIFSTFNNVNCSKLRNKPKVIIIQACRGENKGGLLVRDDVASPPLEDDGLHFVQREADFICFCSSTPDTVSWRDPTKGSVFITHLIEKMNEYAHCQPLGDIFLEVQSLFKDKCPNSRSQMPTQERCTLTKKFYLFPGY.

Residues 1-100 (MTAQLNKVRR…PPMAPVPIQE (100 aa)) constitute a propeptide that is removed on maturation. The CARD domain maps to 22-88 (SDLLDDLREK…HKTLAKSLGL (67 aa)). Residues histidine 218 and cysteine 274 contribute to the active site. Residues 287–296 (DVASPPLEDD) constitute a propeptide that is removed on maturation.

This sequence belongs to the peptidase C14A family. Heterotetramer that consists of two anti-parallel arranged heterodimers, each one formed by a 20 kDa (Caspase-1 subunit p20) and a 10 kDa (Caspase-1 subunit p10) subunit. In terms of assembly, heterotetramer that consists of two anti-parallel arranged heterodimers, each one formed by a 20 kDa (Caspase-1 subunit p20) and a 10 kDa (Caspase-1 subunit p10) subunit. Can form a heterodimer with isoform epsilon which then has an inhibitory effect. The two subunits are derived from the precursor sequence by an autocatalytic mechanism.

The protein resides in the cytoplasm. It localises to the cell membrane. The catalysed reaction is Strict requirement for an Asp residue at position P1 and has a preferred cleavage sequence of Tyr-Val-Ala-Asp-|-.. Functionally, thiol protease involved in a variety of inflammatory processes by proteolytically cleaving other proteins, such as the precursors of the inflammatory cytokines interleukin-1 beta (IL1B) and interleukin 18 (IL18) as well as the pyroptosis inducer Gasdermin-D (GSDMD), into active mature peptides. Plays a key role in cell immunity as an inflammatory response initiator: once activated through formation of an inflammasome complex, it initiates a pro-inflammatory response through the cleavage of the two inflammatory cytokines IL1B and IL18, releasing the mature cytokines which are involved in a variety of inflammatory processes. Cleaves a tetrapeptide after an Asp residue at position P1. Also initiates pyroptosis, a programmed lytic cell death pathway, through cleavage of GSDMD. The sequence is that of Caspase-1-A (casp1-a) from Xenopus laevis (African clawed frog).